Consider the following 295-residue polypeptide: Phosphatidylserine decarboxylase proenzyme (295 aa).

Residues Asp90, His147, and Ser254 each act as charge relay system; for autoendoproteolytic cleavage activity in the active site. Ser254 functions as the Schiff-base intermediate with substrate; via pyruvic acid; for decarboxylase activity in the catalytic mechanism. Ser254 bears the Pyruvic acid (Ser); by autocatalysis mark.

It belongs to the phosphatidylserine decarboxylase family. PSD-B subfamily. Prokaryotic type I sub-subfamily. Heterodimer of a large membrane-associated beta subunit and a small pyruvoyl-containing alpha subunit. Pyruvate serves as cofactor. Post-translationally, is synthesized initially as an inactive proenzyme. Formation of the active enzyme involves a self-maturation process in which the active site pyruvoyl group is generated from an internal serine residue via an autocatalytic post-translational modification. Two non-identical subunits are generated from the proenzyme in this reaction, and the pyruvate is formed at the N-terminus of the alpha chain, which is derived from the carboxyl end of the proenzyme. The autoendoproteolytic cleavage occurs by a canonical serine protease mechanism, in which the side chain hydroxyl group of the serine supplies its oxygen atom to form the C-terminus of the beta chain, while the remainder of the serine residue undergoes an oxidative deamination to produce ammonia and the pyruvoyl prosthetic group on the alpha chain. During this reaction, the Ser that is part of the protease active site of the proenzyme becomes the pyruvoyl prosthetic group, which constitutes an essential element of the active site of the mature decarboxylase.

The protein resides in the cell membrane. It carries out the reaction a 1,2-diacyl-sn-glycero-3-phospho-L-serine + H(+) = a 1,2-diacyl-sn-glycero-3-phosphoethanolamine + CO2. It functions in the pathway phospholipid metabolism; phosphatidylethanolamine biosynthesis; phosphatidylethanolamine from CDP-diacylglycerol: step 2/2. In terms of biological role, catalyzes the formation of phosphatidylethanolamine (PtdEtn) from phosphatidylserine (PtdSer). In Sodalis glossinidius (strain morsitans), this protein is Phosphatidylserine decarboxylase proenzyme.